The following is a 911-amino-acid chain: Brevican core protein (911 aa).

The N-terminal stretch at 1-22 (MAQLFLPLLAALVLAQAPAALA) is a signal peptide. The Ig-like V-type domain occupies 36–155 (RVRIAGDAPL…SSDAVEVKVK (120 aa)). 5 disulfide bridges follow: C57/C137, C179/C250, C203/C224, C277/C352, and C301/C322. An N-linked (GlcNAc...) asparagine glycan is attached at N130. 2 Link domains span residues 157 to 252 (VVFL…YCYA) and 257 to 354 (GELF…YCFR). N-linked (GlcNAc...) asparagine glycosylation occurs at N337. The interval 391–641 (QLPQEATESE…PTDSASRGGV (251 aa)) is disordered. Position 418 is a phosphoserine (S418). O-linked (Xyl...) (chondroitin sulfate) serine glycosylation is present at S418. Over residues 454 to 478 (EEEEKYEDEEEKEEEEEEEEVEDEA) the composition is skewed to acidic residues. 2 O-glycosylated at two sites regions span residues 520 to 530 (SPLPDGESEAS) and 540 to 545 (TETLPT). The interval 569–575 (TGGPELS) is O-glycosylated at one site. Over residues 612 to 627 (EDNSGRTAPAGTSVQA) the composition is skewed to polar residues. Residue A646 is the site of GPI-anchor amidated alanine attachment. The EGF-like domain occupies 646 to 682 (ASGDCVPSPCHNGGTCLEEEEGVRCLCLPGYGGDLCD). 8 cysteine pairs are disulfide-bonded: C650–C661, C655–C670, C672–C681, C688–C699, C716–C808, C784–C800, C815–C858, and C844–C871. A C-type lectin domain is found at 695-809 (FQGACYKHFS…CNYHLSYTCK (115 aa)). The region spanning 813 to 873 (VSCGPPPELP…WEAPQISCVP (61 aa)) is the Sushi domain. Residues S905 and S906 are each glycosylated (O-linked (GalNAc...) serine).

It belongs to the aggrecan/versican proteoglycan family. Interacts with TNR. In terms of processing, O-glycosylated; contains chondroitin sulfate. O-glycosylated with a core 1 or possibly core 8 glycan. As to expression, expressed in the retina, specifically in the inner nuclear layer, inner plexiform layer and ganglion cell layer (at protein level). Detected in cerebrospinal fluid (at protein level). Detected in urine (at protein level).

It localises to the secreted. The protein localises to the extracellular space. Its subcellular location is the extracellular matrix. The protein resides in the membrane. In terms of biological role, may play a role in the terminally differentiating and the adult nervous system during postnatal development. Could stabilize interactions between hyaluronan (HA) and brain proteoglycans. This is Brevican core protein (BCAN) from Homo sapiens (Human).